Consider the following 330-residue polypeptide: Fructose-1,6-bisphosphatase class 1 (330 aa).

Residues Glu-78, Asp-97, Leu-99, and Asp-100 each coordinate Mg(2+). Substrate contacts are provided by residues 100-103 (DGSS) and Asn-188. Glu-260 contacts Mg(2+).

It belongs to the FBPase class 1 family. As to quaternary structure, homotetramer. Mg(2+) serves as cofactor.

It is found in the cytoplasm. It catalyses the reaction beta-D-fructose 1,6-bisphosphate + H2O = beta-D-fructose 6-phosphate + phosphate. It functions in the pathway carbohydrate biosynthesis; gluconeogenesis. The protein is Fructose-1,6-bisphosphatase class 1 of Paracoccus denitrificans (strain Pd 1222).